A 205-amino-acid chain; its full sequence is Methylthioribulose-1-phosphate dehydratase (205 aa).

The Zn(2+) site is built by His96 and His98.

The protein belongs to the aldolase class II family. MtnB subfamily. It depends on Zn(2+) as a cofactor.

The catalysed reaction is 5-(methylsulfanyl)-D-ribulose 1-phosphate = 5-methylsulfanyl-2,3-dioxopentyl phosphate + H2O. It participates in amino-acid biosynthesis; L-methionine biosynthesis via salvage pathway; L-methionine from S-methyl-5-thio-alpha-D-ribose 1-phosphate: step 2/6. In terms of biological role, catalyzes the dehydration of methylthioribulose-1-phosphate (MTRu-1-P) into 2,3-diketo-5-methylthiopentyl-1-phosphate (DK-MTP-1-P). The protein is Methylthioribulose-1-phosphate dehydratase of Pseudomonas aeruginosa (strain ATCC 15692 / DSM 22644 / CIP 104116 / JCM 14847 / LMG 12228 / 1C / PRS 101 / PAO1).